A 159-amino-acid chain; its full sequence is Bacterioferritin (159 aa).

The region spanning 1–145 (MQGDPEVLRL…TQLELMDKLG (145 aa)) is the Ferritin-like diiron domain. Residue E51 participates in Fe cation binding. M52 lines the heme b pocket. Positions 54, 94, 127, and 130 each coordinate Fe cation.

The protein belongs to the bacterioferritin family. As to quaternary structure, homooligomer of 24 subunits, arranged as 12 dimers, that are packed together to form an approximately spherical molecule with a central cavity, in which large amounts of iron can be deposited. Requires heme b as cofactor.

It carries out the reaction 4 Fe(2+) + O2 + 4 H(+) = 4 Fe(3+) + 2 H2O. The enzyme catalyses Fe(2+)(in) = Fe(2+)(out). Functionally, iron-storage protein, whose ferroxidase center binds Fe(2+), oxidizes it using dioxygen to Fe(3+), and participates in the subsequent Fe(3+) oxide mineral core formation within the central cavity of the BFR protein shell. This Mycobacterium avium protein is Bacterioferritin (bfr).